A 186-amino-acid polypeptide reads, in one-letter code: uncharacterized protein (186 aa).

The next 3 membrane-spanning stretches (helical) occupy residues 42-62 (ISIA…LSVL), 80-100 (LLFL…IGLV), and 131-151 (ICGI…FIVL).

This sequence to U.parvum UU008, UU041 and UU042.

The protein resides in the cell membrane. This is an uncharacterized protein from Ureaplasma parvum serovar 3 (strain ATCC 700970).